The following is a 477-amino-acid chain: Aspartyl/glutamyl-tRNA(Asn/Gln) amidotransferase subunit B (477 aa).

It belongs to the GatB/GatE family. GatB subfamily. Heterotrimer of A, B and C subunits.

The enzyme catalyses L-glutamyl-tRNA(Gln) + L-glutamine + ATP + H2O = L-glutaminyl-tRNA(Gln) + L-glutamate + ADP + phosphate + H(+). It carries out the reaction L-aspartyl-tRNA(Asn) + L-glutamine + ATP + H2O = L-asparaginyl-tRNA(Asn) + L-glutamate + ADP + phosphate + 2 H(+). In terms of biological role, allows the formation of correctly charged Asn-tRNA(Asn) or Gln-tRNA(Gln) through the transamidation of misacylated Asp-tRNA(Asn) or Glu-tRNA(Gln) in organisms which lack either or both of asparaginyl-tRNA or glutaminyl-tRNA synthetases. The reaction takes place in the presence of glutamine and ATP through an activated phospho-Asp-tRNA(Asn) or phospho-Glu-tRNA(Gln). The protein is Aspartyl/glutamyl-tRNA(Asn/Gln) amidotransferase subunit B of Coxiella burnetii (strain CbuG_Q212) (Coxiella burnetii (strain Q212)).